We begin with the raw amino-acid sequence, 299 residues long: ATP phosphoribosyltransferase (299 aa).

This sequence belongs to the ATP phosphoribosyltransferase family. Long subfamily. Equilibrium between an active dimeric form, an inactive hexameric form and higher aggregates. Interconversion between the various forms is largely reversible and is influenced by the natural substrates and inhibitors of the enzyme. The cofactor is Mg(2+).

The protein resides in the cytoplasm. It carries out the reaction 1-(5-phospho-beta-D-ribosyl)-ATP + diphosphate = 5-phospho-alpha-D-ribose 1-diphosphate + ATP. Its pathway is amino-acid biosynthesis; L-histidine biosynthesis; L-histidine from 5-phospho-alpha-D-ribose 1-diphosphate: step 1/9. Feedback inhibited by histidine. Its function is as follows. Catalyzes the condensation of ATP and 5-phosphoribose 1-diphosphate to form N'-(5'-phosphoribosyl)-ATP (PR-ATP). Has a crucial role in the pathway because the rate of histidine biosynthesis seems to be controlled primarily by regulation of HisG enzymatic activity. The sequence is that of ATP phosphoribosyltransferase from Proteus mirabilis (strain HI4320).